We begin with the raw amino-acid sequence, 35 residues long: Alpha-amanitin proprotein 1 (35 aa).

Residues 1–10 (MSDINATRLP) constitute a propeptide that is removed on maturation. A (3R,4R)-4,5-dihydroxyisoleucine; in form alpha-amanitin modification is found at Ile-11. Ile-11 bears the (3R,4S)-4-hydroxyisoleucine; in form gamma-amanitin mark. Positions 11-18 (IWGIGCNP) form a cross-link, cyclopeptide (Ile-Pro). The 2'-cysteinyl-6'-hydroxytryptophan sulfoxide (Trp-Cys) cross-link spans 12 to 16 (WGIGC). Pro-18 bears the 4-hydroxyproline mark. Residues 19-35 (CVGDDVTSVLTRGEALC) constitute a propeptide that is removed on maturation.

Belongs to the MSDIN fungal toxin family. In terms of processing, processed by the macrocyclase-peptidase enzyme POPB to yield a toxic cyclic octapeptide. POPB first removes 10 residues from the N-terminus. Conformational trapping of the remaining peptide forces the enzyme to release this intermediate rather than proceed to macrocyclization. The enzyme rebinds the remaining peptide in a different conformation and catalyzes macrocyclization of the N-terminal 8 residues. As to expression, expressed in basidiocarps.

Functionally, major toxin belonging to the bicyclic octapeptides amatoxins that acts by binding non-competitively to RNA polymerase II and greatly slowing the elongation of transcripts from target promoters. This is Alpha-amanitin proprotein 1 from Amanita exitialis (Guangzhou destroying angel).